A 387-amino-acid polypeptide reads, in one-letter code: Gamma-butyrobetaine dioxygenase (387 aa).

4 residues coordinate Zn(2+): cysteine 38, cysteine 40, cysteine 43, and histidine 82. Fe cation is bound by residues histidine 202, aspartate 204, and histidine 347. Serine 351 is subject to Phosphoserine.

This sequence belongs to the gamma-BBH/TMLD family. Fe(2+) serves as cofactor. L-ascorbate is required as a cofactor.

The protein resides in the cytoplasm. The enzyme catalyses 4-(trimethylamino)butanoate + 2-oxoglutarate + O2 = carnitine + succinate + CO2. Its pathway is amine and polyamine biosynthesis; carnitine biosynthesis. In terms of biological role, catalyzes the formation of L-carnitine from gamma-butyrobetaine. In Mus musculus (Mouse), this protein is Gamma-butyrobetaine dioxygenase (Bbox1).